We begin with the raw amino-acid sequence, 429 residues long: Enolase (429 aa).

Residue Gln162 coordinates (2R)-2-phosphoglycerate. The active-site Proton donor is the Glu204. Mg(2+) is bound by residues Asp241, Glu283, and Asp310. The (2R)-2-phosphoglycerate site is built by Lys335, Arg364, Ser365, and Lys386. Lys335 (proton acceptor) is an active-site residue.

It belongs to the enolase family. Mg(2+) is required as a cofactor.

It localises to the cytoplasm. It is found in the secreted. Its subcellular location is the cell surface. It carries out the reaction (2R)-2-phosphoglycerate = phosphoenolpyruvate + H2O. It participates in carbohydrate degradation; glycolysis; pyruvate from D-glyceraldehyde 3-phosphate: step 4/5. Catalyzes the reversible conversion of 2-phosphoglycerate (2-PG) into phosphoenolpyruvate (PEP). It is essential for the degradation of carbohydrates via glycolysis. This Mycobacterium sp. (strain JLS) protein is Enolase.